The chain runs to 732 residues: Catalase-peroxidase (732 aa).

Residues 1–20 are disordered; sequence MDKDSKRPVVGSTVRGGMSN. A cross-link (tryptophyl-tyrosyl-methioninium (Trp-Tyr) (with M-246)) is located at residues 92 to 220; sequence WHSAGTYRMG…LAAVQMGLIY (129 aa). His93 acts as the Proton acceptor in catalysis. Residues 220–246 constitute a cross-link (tryptophyl-tyrosyl-methioninium (Tyr-Met) (with W-92)); that stretch reads YVNPEGPDGNPDPVAAGYDVIETFARM. His261 is a binding site for heme b.

This sequence belongs to the peroxidase family. Peroxidase/catalase subfamily. In terms of assembly, homodimer or homotetramer. Heme b is required as a cofactor. In terms of processing, formation of the three residue Trp-Tyr-Met cross-link is important for the catalase, but not the peroxidase activity of the enzyme.

It carries out the reaction H2O2 + AH2 = A + 2 H2O. It catalyses the reaction 2 H2O2 = O2 + 2 H2O. Its function is as follows. Bifunctional enzyme with both catalase and broad-spectrum peroxidase activity. This Desulfosudis oleivorans (strain DSM 6200 / JCM 39069 / Hxd3) (Desulfococcus oleovorans) protein is Catalase-peroxidase.